The primary structure comprises 152 residues: Deoxyuridine 5'-triphosphate nucleotidohydrolase (152 aa).

Substrate contacts are provided by residues 72–74 (RSG), Asn-85, and 89–91 (TID).

This sequence belongs to the dUTPase family. Mg(2+) is required as a cofactor.

The enzyme catalyses dUTP + H2O = dUMP + diphosphate + H(+). It participates in pyrimidine metabolism; dUMP biosynthesis; dUMP from dCTP (dUTP route): step 2/2. In terms of biological role, this enzyme is involved in nucleotide metabolism: it produces dUMP, the immediate precursor of thymidine nucleotides and it decreases the intracellular concentration of dUTP so that uracil cannot be incorporated into DNA. The protein is Deoxyuridine 5'-triphosphate nucleotidohydrolase of Rhodopseudomonas palustris (strain ATCC BAA-98 / CGA009).